The sequence spans 234 residues: UDP-2,3-diacylglucosamine hydrolase (234 aa).

Mn(2+) is bound by residues aspartate 9, histidine 11, aspartate 42, asparagine 80, and histidine 115. 80-81 serves as a coordination point for substrate; sequence NR. Substrate contacts are provided by aspartate 123, serine 161, lysine 165, lysine 168, and histidine 196. Histidine 196 and histidine 198 together coordinate Mn(2+).

The protein belongs to the LpxH family. The cofactor is Mn(2+).

It is found in the cell inner membrane. It catalyses the reaction UDP-2-N,3-O-bis[(3R)-3-hydroxytetradecanoyl]-alpha-D-glucosamine + H2O = 2-N,3-O-bis[(3R)-3-hydroxytetradecanoyl]-alpha-D-glucosaminyl 1-phosphate + UMP + 2 H(+). It participates in glycolipid biosynthesis; lipid IV(A) biosynthesis; lipid IV(A) from (3R)-3-hydroxytetradecanoyl-[acyl-carrier-protein] and UDP-N-acetyl-alpha-D-glucosamine: step 4/6. In terms of biological role, hydrolyzes the pyrophosphate bond of UDP-2,3-diacylglucosamine to yield 2,3-diacylglucosamine 1-phosphate (lipid X) and UMP by catalyzing the attack of water at the alpha-P atom. Involved in the biosynthesis of lipid A, a phosphorylated glycolipid that anchors the lipopolysaccharide to the outer membrane of the cell. The polypeptide is UDP-2,3-diacylglucosamine hydrolase (Histophilus somni (strain 129Pt) (Haemophilus somnus)).